The sequence spans 592 residues: MMENNRNYFVAIALSVLILVAWQYFYVNPRMDKDRIAAEKAQQTQQVQPQQGGQQPAPGQALPGGAVPGESRDQAVAKSARVAIDTPALSGSINLTGARFDDLKLKGYHETVDPKSPVITLFSPAETADGYFTEIGYIGNDASGSVPGPQTVWTLSGGEKLTPATPVTLTYTNDKGITFARTISIDENYMFQVVDSIKNDGSAPVSLSSYGRVTRFNKPTTPSIYVLHEGFIGVAGGSLQEVGYSKIEENLPVEPGKTTGGWHGITDKYWAAAIVPPQETPFDIRFSHFTDGRPRFQSDYKGDAVTVAPGQSAEVKNLVFAGAKEVQVVDTYTTAYAIPKFEKLIDWGWFWFITQPMFKMMDFFFRLFGNFGVAILVTTIVVKLIFFPLANKQYASMANMKKVQPKMEELKKKFGDDRMGLQQAMMQLYKDEKINPLAGCWPILIQIPVFFALYKVIYITIEMRHAPFFGWIRDLSAPDPTTIVNLFGLLPFDGPAFLHLGIWPIIMGVTMFLQMRMNPTPPDPTQAMLFTWMPLVFTFMLASFPAGLVIYWAWNNTLSITQQSIIMKRQGVKIELFDNLKGLFTKRPKPAE.

A helical transmembrane segment spans residues asparagine 7–valine 27. The disordered stretch occupies residues alanine 38–glutamine 74. Over residues alanine 41–glycine 69 the composition is skewed to low complexity. The next 4 membrane-spanning stretches (helical) occupy residues leucine 367 to phenylalanine 387, tryptophan 441 to isoleucine 461, leucine 486 to isoleucine 506, and phenylalanine 530 to isoleucine 550.

Belongs to the OXA1/ALB3/YidC family. Type 1 subfamily. As to quaternary structure, interacts with the Sec translocase complex via SecD. Specifically interacts with transmembrane segments of nascent integral membrane proteins during membrane integration.

The protein localises to the cell inner membrane. Its function is as follows. Required for the insertion and/or proper folding and/or complex formation of integral membrane proteins into the membrane. Involved in integration of membrane proteins that insert both dependently and independently of the Sec translocase complex, as well as at least some lipoproteins. Aids folding of multispanning membrane proteins. The polypeptide is Membrane protein insertase YidC (Sinorhizobium fredii (strain NBRC 101917 / NGR234)).